A 359-amino-acid chain; its full sequence is snRNA-activating protein complex subunit 2 (359 aa).

Basic residues predominate over residues 1–11; it reads MKPPQRRRRVP. 3 disordered regions span residues 1-22, 157-221, and 291-327; these read MKPP…TGPT, NQDG…GSST, and TALP…SEPI.

As to quaternary structure, part of the SNAPc complex composed of 5 subunits: SNAPC1, SNAPC2, SNAPC3, SNAPC4 and SNAPC5. SNAPC2 interacts with TBP and SNAPC4.

It is found in the nucleus. In terms of biological role, part of the SNAPc complex required for the transcription of both RNA polymerase II and III small-nuclear RNA genes. Binds to the proximal sequence element (PSE), a non-TATA-box basal promoter element common to these 2 types of genes. Recruits TBP and BRF2 to the U6 snRNA TATA box. The protein is snRNA-activating protein complex subunit 2 (Snapc2) of Mus musculus (Mouse).